The chain runs to 303 residues: MIKQRTLKNIIRATGVGLHSGEKVYLTLKPAPVDTGIVFCRTDLDPVVEIPARAENVGETTMSTTLVKGDVKVDTVEHLLSAMAGLGIDNAYVELSASEVPIMDGSAGPFVFLIQSAGLQEQEAAKKFIRIKREVSVEEGDKRAVFVPFDGFKVSFEIDFDHPVFRGRTQQASVDFSSTSFVKEVSRARTFGFMRDIEYLRSQNLALGGSVENAIVVDENRVLNEDGLRYEDEFVKHKILDAIGDLYLLGNSLIGEFRGFKSGHALNNQLLRSLIADRDAWEVVTFEDARTAPISYMRPAAAV.

Zn(2+) is bound by residues His78, His237, and Asp241. Residue His264 is the Proton donor of the active site.

This sequence belongs to the LpxC family. Zn(2+) serves as cofactor.

It carries out the reaction a UDP-3-O-[(3R)-3-hydroxyacyl]-N-acetyl-alpha-D-glucosamine + H2O = a UDP-3-O-[(3R)-3-hydroxyacyl]-alpha-D-glucosamine + acetate. Its pathway is glycolipid biosynthesis; lipid IV(A) biosynthesis; lipid IV(A) from (3R)-3-hydroxytetradecanoyl-[acyl-carrier-protein] and UDP-N-acetyl-alpha-D-glucosamine: step 2/6. In terms of biological role, catalyzes the hydrolysis of UDP-3-O-myristoyl-N-acetylglucosamine to form UDP-3-O-myristoylglucosamine and acetate, the committed step in lipid A biosynthesis. The polypeptide is UDP-3-O-acyl-N-acetylglucosamine deacetylase (Pseudomonas paraeruginosa (strain DSM 24068 / PA7) (Pseudomonas aeruginosa (strain PA7))).